Here is a 699-residue protein sequence, read N- to C-terminus: Polyribonucleotide nucleotidyltransferase (699 aa).

Mg(2+) is bound by residues aspartate 484 and aspartate 490. Positions 551 to 610 constitute a KH domain; sequence PRITTIQVKPDQVRTVIGPGGKNVRGIIEATGCAIDIEDDGRINIASADGDACKAAIKMI. The 69-residue stretch at 620-688 folds into the S1 motif domain; the sequence is GKLYMATVKK…RQGKIKLSRK (69 aa).

Belongs to the polyribonucleotide nucleotidyltransferase family. Requires Mg(2+) as cofactor.

Its subcellular location is the cytoplasm. The enzyme catalyses RNA(n+1) + phosphate = RNA(n) + a ribonucleoside 5'-diphosphate. Its function is as follows. Involved in mRNA degradation. Catalyzes the phosphorolysis of single-stranded polyribonucleotides processively in the 3'- to 5'-direction. This chain is Polyribonucleotide nucleotidyltransferase, found in Syntrophotalea carbinolica (strain DSM 2380 / NBRC 103641 / GraBd1) (Pelobacter carbinolicus).